Reading from the N-terminus, the 875-residue chain is Protein HIR2 (875 aa).

WD repeat units lie at residues 10–47 (IHNE…DTAF), 118–158 (KSPS…KLSE), 163–201 (KASK…THKL), 237–277 (PNNA…PAFY), 278–316 (EKPN…PLFN), and 320–359 (VSST…LGVA). Residues 398–473 (ESASAAPIPN…IAPGSKKQKK (76 aa)) are disordered. Residues 424-446 (ANNQTNGIKTIQSTSMEFNTPSY) are compositionally biased toward polar residues. 2 WD repeats span residues 546 to 587 (LFQD…LMAP) and 589 to 626 (VLGV…LAFP). The residue at position 713 (Ser-713) is a Phosphoserine.

Belongs to the WD repeat HIR1 family. Component of the HIR complex, composed of HIR1, HIR2, HIR3 and HPC2. This complex may consist of one copy of HIR1 and HIR3 and two copies of HIR2 and HPC2. The HIR complex interacts with ASF1. Interacts with SNF2. Interacts with SNF5. Interacts with SWI3. Interacts with RTT106.

The protein localises to the nucleus. It is found in the chromosome. Its function is as follows. Component of the HIR complex, which cooperates with ASF1 to promote replication-independent chromatin assembly. The HIR complex is also required for the periodic repression of three of the four histone gene loci during the cell cycle as well as for autogenous regulation of the HTA1-HTB1 locus by H2A and H2B. DNA-binding by the HIR complex may repress transcription by inhibiting nucleosome remodeling by the SWI/SNF complex. The HIR complex may also be required for transcriptional silencing of centromeric, telomeric and mating-type loci in the absence of CAF-1. The protein is Protein HIR2 (HIR2) of Saccharomyces cerevisiae (strain ATCC 204508 / S288c) (Baker's yeast).